The following is a 258-amino-acid chain: Alpha-fibrinogenase (258 aa).

Residues 1–18 form the signal peptide; sequence MVLIRVLANLVMLHLSYG. Residues 19 to 24 constitute a propeptide that is removed on maturation; it reads EKSSEL. The Peptidase S1 domain occupies 25 to 249; it reads VIGGRPCNIN…YNDWIQSIIA (225 aa). Disulfide bonds link C31–C163, C50–C66, C98–C256, C142–C210, C174–C189, and C200–C225. N-linked (GlcNAc...) asparagine glycosylation is present at N44. Residue H65 is the Charge relay system of the active site. N-linked (GlcNAc...) asparagine glycosylation is found at N79 and N101. D110 acts as the Charge relay system in catalysis. The Charge relay system role is filled by S204.

This sequence belongs to the peptidase S1 family. Snake venom subfamily. As to quaternary structure, monomer. Glycosylated. Contains 8.5% of hexoses, 5.8% of hexosamines and 0.8% of sialic acids. Expressed by the venom gland.

The protein localises to the secreted. Inhibited by diisopropylfluorophosphate (DFP) and PMSF, and partially by soybean trypsin inhibitor, but not by EDTA. Functionally, degrades alpha chain of fibrinogen (FGA), and has strong caseinolytic activity. Cleaves oxidized insulin B-chain at '40-Tyr-|-Leu-41', '48-Phe-|-Phe-49' and '49-Phe-|-Tyr-50', and glucagon at the bonds '62-Tyr-|-Ser-63', 66-Leu-|-Asp-67' and '78-Leu-|-Met-79' bonds. The polypeptide is Alpha-fibrinogenase (Macrovipera lebetinus (Levantine viper)).